We begin with the raw amino-acid sequence, 253 residues long: Carboxy-S-adenosyl-L-methionine synthase (253 aa).

S-adenosyl-L-methionine contacts are provided by residues Tyr49, 74-76, 98-99, and Asn141; these read GCS and DN.

Belongs to the class I-like SAM-binding methyltransferase superfamily. Cx-SAM synthase family.

The enzyme catalyses prephenate + S-adenosyl-L-methionine = carboxy-S-adenosyl-L-methionine + 3-phenylpyruvate + H2O. Catalyzes the conversion of S-adenosyl-L-methionine (SAM) to carboxy-S-adenosyl-L-methionine (Cx-SAM). The chain is Carboxy-S-adenosyl-L-methionine synthase from Trichodesmium erythraeum (strain IMS101).